The sequence spans 564 residues: Proline--tRNA ligase (564 aa).

Belongs to the class-II aminoacyl-tRNA synthetase family. ProS type 1 subfamily. In terms of assembly, homodimer.

The protein localises to the cytoplasm. The catalysed reaction is tRNA(Pro) + L-proline + ATP = L-prolyl-tRNA(Pro) + AMP + diphosphate. Catalyzes the attachment of proline to tRNA(Pro) in a two-step reaction: proline is first activated by ATP to form Pro-AMP and then transferred to the acceptor end of tRNA(Pro). As ProRS can inadvertently accommodate and process non-cognate amino acids such as alanine and cysteine, to avoid such errors it has two additional distinct editing activities against alanine. One activity is designated as 'pretransfer' editing and involves the tRNA(Pro)-independent hydrolysis of activated Ala-AMP. The other activity is designated 'posttransfer' editing and involves deacylation of mischarged Ala-tRNA(Pro). The misacylated Cys-tRNA(Pro) is not edited by ProRS. The chain is Proline--tRNA ligase from Xylella fastidiosa (strain Temecula1 / ATCC 700964).